A 133-amino-acid polypeptide reads, in one-letter code: Ribosome-binding factor A (133 aa).

The protein belongs to the RbfA family. As to quaternary structure, monomer. Binds 30S ribosomal subunits, but not 50S ribosomal subunits or 70S ribosomes.

It localises to the cytoplasm. Functionally, one of several proteins that assist in the late maturation steps of the functional core of the 30S ribosomal subunit. Associates with free 30S ribosomal subunits (but not with 30S subunits that are part of 70S ribosomes or polysomes). Required for efficient processing of 16S rRNA. May interact with the 5'-terminal helix region of 16S rRNA. The sequence is that of Ribosome-binding factor A from Shigella boydii serotype 18 (strain CDC 3083-94 / BS512).